A 554-amino-acid polypeptide reads, in one-letter code: MALRVAAFDLDGVLALPSIAGAFRRSEEALALPRDFLLGAYQTEFPEGPTEQLMKGKITFSQWVPLMDESYRKSSKACGANLPENFSISQIFSQAMAARSINRPMLQAAIALKKKGFTTCIVTNNWLDDGDKRDSLAQMMCELSQHFDFLIESCQVGMIKPEPQIYNFLLDTLKAKPNEVVFLDDFGSNLKPARDMGMVTILVHNTASALRELEKVTGTQFPEAPLPVPCNPNDVSHGYVTVKPGIRLHFVEMGSGPALCLCHGFPESWFSWRYQIPALAQAGFRVLAIDMKGYGDSSSPPEIEEYAMELLCKEMVTFLDKLGIPQAVFIGHDWAGVMVWNMALFYPERVRAVASLNTPFMPPDPDVSPMKVIRSIPVFNYQLYFQEPGVAEAELEKNMSRTFKSFFRASDETGFIAVHKATEIGGILVNTPEDPNLSKITTEEEIEFYIQQFKKTGFRGPLNWYRNTERNWKWSCKGLGRKILVPALMVTAEKDIVLRPEMSKNMEKWIPFLKRGHIEDCGHWTQIEKPTEVNQILIKWLQTEVQNPSVTSKI.

Residues 1–224 (MALRVAAFDL…KVTGTQFPEA (224 aa)) form a phosphatase region. Residues Asp-9 and Asp-11 each coordinate Mg(2+). At Lys-55 the chain carries N6-succinyllysine. 123–124 (TN) serves as a coordination point for phosphate. N6-acetyllysine; alternate is present on Lys-176. Lys-176 is modified (N6-succinyllysine; alternate). Asp-185 is a Mg(2+) binding site. An N6-acetyllysine mark is found at Lys-191 and Lys-215. The interval 233–554 (NDVSHGYVTV…VQNPSVTSKI (322 aa)) is epoxide hydrolase. Residues 257 to 530 (PALCLCHGFP…CGHWTQIEKP (274 aa)) form the AB hydrolase-1 domain. Asp-333 functions as the Nucleophile in the catalytic mechanism. Residue Ser-368 is modified to Phosphoserine. Position 371 is an N6-succinyllysine (Lys-371). Tyr-381 is a binding site for substrate. N6-succinyllysine is present on residues Lys-420 and Lys-454. Tyr-465 functions as the Proton donor in the catalytic mechanism. An N6-succinyllysine modification is found at Lys-504. N6-acetyllysine; alternate is present on Lys-508. An N6-succinyllysine; alternate modification is found at Lys-508. The S-(15-deoxy-Delta12,14-prostaglandin J2-9-yl)cysteine moiety is linked to residue Cys-521. His-523 serves as the catalytic Proton acceptor. The Microbody targeting signal signature appears at 552-554 (SKI). Lys-553 carries the post-translational modification N6-succinyllysine.

This sequence belongs to the AB hydrolase superfamily. Epoxide hydrolase family. As to quaternary structure, homodimer. Mg(2+) is required as a cofactor. The N-terminus is blocked. Post-translationally, the covalent modification of cysteine by 15-deoxy-Delta12,14-prostaglandin-J2 is autocatalytic and reversible. It may occur as an alternative to other cysteine modifications, such as S-nitrosylation and S-palmitoylation. As to expression, detected in liver, intestine, ovary and kidney. Detected at low levels in heart and muscle.

Its subcellular location is the cytoplasm. The protein localises to the peroxisome. The enzyme catalyses an epoxide + H2O = an ethanediol. The catalysed reaction is (9S,10S)-10-hydroxy-9-(phosphooxy)octadecanoate + H2O = (9S,10S)-9,10-dihydroxyoctadecanoate + phosphate. It catalyses the reaction 8-hydroxy-(11S,12S)-epoxy-(5Z,9E,14Z)-eicosatrienoate + H2O = (8,11R,12S)-trihydroxy-(5Z,9E,14Z)-eicosatrienoate. It carries out the reaction 10-hydroxy-(11S,12S)-epoxy- (5Z,8Z,14Z)-eicosatrienoate + H2O = (10,11S,12R)-trihydroxy-(5Z,8Z,14Z)-eicosatrienoate. The enzyme catalyses (8S,9R)-epoxy-(5Z,11Z,14Z)-eicosatrienoate + H2O = (8S,9S)-dihydroxy-(5Z,11Z,14Z)-eicosatrienoate. The catalysed reaction is (11S,12R)-epoxy-(5Z,8Z,14Z)-eicosatrienoate + H2O = (11R,12R)-dihydroxy-(5Z,8Z,14Z)-eicosatrienoate. It catalyses the reaction (11S,12R)-epoxy-(5Z,8Z,14Z)-eicosatrienoate + H2O = (11S,12S)-dihydroxy-(5Z,8Z,14Z)-eicosatrienoate. It carries out the reaction (14S,15R)-epoxy-(5Z,8Z,11Z)-eicosatrienoate + H2O = (14R,15R)-dihydroxy-(5Z,8Z,11Z)-eicosatrienoate. The enzyme catalyses (14S,15R)-epoxy-(5Z,8Z,11Z)-eicosatrienoate + H2O = (14S,15S)-dihydroxy-(5Z,8Z,11Z)-eicosatrienoate. The catalysed reaction is (11R,12S)-epoxy-(5Z,8Z,14Z)-eicosatrienoate + H2O = (11S,12S)-dihydroxy-(5Z,8Z,14Z)-eicosatrienoate. It catalyses the reaction (11R,12S)-epoxy-(5Z,8Z,14Z)-eicosatrienoate + H2O = (11R,12R)-dihydroxy-(5Z,8Z,14Z)-eicosatrienoate. It carries out the reaction (8S,9R)-epoxy-(5Z,11Z,14Z)-eicosatrienoate + H2O = (8R,9R)-dihydroxy-(5Z,11Z,14Z)-eicosatrienoate. The enzyme catalyses 12-phosphooxy-(9Z)-octadecenoate + H2O = 12-hydroxy-(9Z)-octadecenoate + phosphate. The catalysed reaction is 12-phosphooxy-(9E)-octadecenoate + H2O = 12-hydroxy-(9E)-octadecenoate + phosphate. It catalyses the reaction 12-(phosphooxy)octadecanoate + H2O = 12-hydroxyoctadecanoate + phosphate. It carries out the reaction 8,9-epoxy-(5Z,11Z,14Z)-eicosatrienoate + H2O = 8,9-dihydroxy-(5Z,11Z,14Z)-eicosatrienoate. The enzyme catalyses 11,12-epoxy-(5Z,8Z,14Z)-eicosatrienoate + H2O = 11,12-dihydroxy-(5Z,8Z,14Z)-eicosatrienoate. The catalysed reaction is 14,15-epoxy-(5Z,8Z,11Z)-eicosatrienoate + H2O = 14,15-dihydroxy-(5Z,8Z,11Z)-eicosatrienoate. It catalyses the reaction 9,10-epoxy-(12Z)-octadecenoate + H2O = 9,10-dihydroxy-(12Z)-octadecenoate. It carries out the reaction 1-tetradecanoyl-sn-glycerol 3-phosphate + H2O = 1-tetradecanoyl-sn-glycerol + phosphate. The enzyme catalyses 1-octadecanoyl-sn-glycero-3-phosphate + H2O = 1-octadecanoyl-sn-glycerol + phosphate. The catalysed reaction is 1-(5Z,8Z,11Z,14Z-eicosatetraenoyl)-sn-glycero-3-phosphate + H2O = 1-(5Z,8Z,11Z,14Z-eicosatetraenoyl)-sn-glycerol + phosphate. It catalyses the reaction 1-hexadecanoyl-sn-glycero-3-phosphate + H2O = 1-hexadecanoyl-sn-glycerol + phosphate. It carries out the reaction 1-(9Z-octadecenoyl)-sn-glycero-3-phosphate + H2O = 1-(9Z-octadecenoyl)-sn-glycerol + phosphate. The enzyme catalyses (14R,15S)-epoxy-(5Z,8Z,11Z)-eicosatrienoate + H2O = (14R,15R)-dihydroxy-(5Z,8Z,11Z)-eicosatrienoate. Its activity is regulated as follows. Inhibited by 1-(1-acetylpiperidin-4-yl)-3-(4-(trifl uoromethoxy)phenyl)urea (TPAU), 1-cyclohexyl-3-dodecylurea (CDU), 12-(3-adamantan-1-yl-ureido)-dodecanoic acid (AUDA), 1-((3S, 5S, 7S)-adamantan-1-yl)-3-(5-(2-(2-ethoxyethoxy) ethoxy)pentyl)urea (AEPU), N-adamantyl-N[']-cyclohexyl urea (ACU), 4-(((1S, 4S)-4-(3-((3S, 5S, 7S)-adamantan-1-yl) ureido)cyclohexyl)oxy)benzoic acid (c-AUCB), 4-(((1R, 4R)-4-(3-((3S, 5S, 7S)-adamantan-1-yl)ureido)cyclohexyl)oxy)benzoic acid (t-AUCB), 4-(((1R, 4R)-4-(3-(4(trifluoromethoxy)phenyl)ureido)cyclohexyl)oxy)benzoic acid (t-TAUCB) and to a lesser extent by 8-(3-((3S, 5S, 7S)-adamantan-1-yl)ureido) octanoic acid (AUOA). Phosphatase activity is inhibited by dodecyl-phosphate, phospholipids such as phospho-lysophosphatidic acids and fatty acids such as palmitic acid and lauric acid. Functionally, bifunctional enzyme. The C-terminal domain has epoxide hydrolase activity and acts on epoxides (alkene oxides, oxiranes) and arene oxides. Plays a role in xenobiotic metabolism by degrading potentially toxic epoxides. Also determines steady-state levels of physiological mediators. Bifunctional enzyme. The N-terminal domain has lipid phosphatase activity, with the highest activity towards threo-9,10-phosphonooxy-hydroxy-octadecanoic acid, followed by erythro-9,10-phosphonooxy-hydroxy-octadecanoic acid, 12-phosphonooxy-octadec-9Z-enoic acid and 12-phosphonooxy-octadec-9E-enoic acid. Has phosphatase activity toward lyso-glycerophospholipids with also some lower activity toward lysolipids of sphingolipid and isoprenoid phosphates. The protein is Bifunctional epoxide hydrolase 2 of Mus musculus (Mouse).